A 501-amino-acid chain; its full sequence is Probable leucine aminopeptidase 2 (501 aa).

An N-terminal signal peptide occupies residues Met-1–Ala-18. The PA domain maps to Ser-119–Ile-216. Asn-123 and Asn-233 each carry an N-linked (GlcNAc...) asparagine glycan. 2 residues coordinate Zn(2+): His-257 and Asp-269. Catalysis depends on Glu-301, which acts as the Proton acceptor. Residue Glu-302 coordinates Zn(2+). Residue Asn-316 is glycosylated (N-linked (GlcNAc...) asparagine). Asp-330 is a Zn(2+) binding site. Asn-350 is a glycosylation site (N-linked (GlcNAc...) asparagine). His-428 lines the Zn(2+) pocket. Asn-433 and Asn-467 each carry an N-linked (GlcNAc...) asparagine glycan. The segment at Ala-480–Gln-501 is disordered.

The protein belongs to the peptidase M28 family. M28A subfamily. As to quaternary structure, monomer. It depends on Zn(2+) as a cofactor.

It is found in the secreted. In terms of biological role, extracellular aminopeptidase that releases a wide variety of amino acids from natural peptides and contributes to pathogenicity. In Aspergillus fumigatus (strain ATCC MYA-4609 / CBS 101355 / FGSC A1100 / Af293) (Neosartorya fumigata), this protein is Probable leucine aminopeptidase 2 (lap2).